Reading from the N-terminus, the 2179-residue chain is MMMMMMMKKMQHQRQHQEDHANEANYARGTRLPISGEGPTSQPNSSKQTVLSWQAAIDAARQAKAAQTMSTSAPPPVGSLSQRKRQQYAKSKKQGNSSNSRPARALFCLSLNNPIRRACISIVEWKPFDIFILLAIFANCVALAIYIPFPEDDSNSTNHNLEKVEYAFLIIFTVETFLKIIAYGLLLHPNAYVRNGWNLLDFVIVIVGLFSVILEQLTKETEGGNHSSGKSGGFDVKALRAFRVLRPLRLVSGVPSLQVVLNSIIKAMVPLLHIALLVLFVIIIYAIIGLELFIGKMHKTCFFADSDIVAEEDPAPCAFSGNGRQCTANGTECRSGWVGPNGGITNFDNFAFAMLTVFQCITMEGWTDVLYWVNDAIGWEWPWVYFVSLIILGSFFVLNLVLGVLSGEFSKEREKAKARGDFQKLREKQQLEEDLKGYLDWITQAEDIDPENEEEGGEEGKRNTSMPTSETESVNTENVSGEGETQGCCGTLWCWWKRRGAAKTGPSGCRRWGQAISKSKLSRRWRRWNRFNRRRCRAAVKSVTFYWLVIVLVFLNTLTISSEHYNQPDWLTQIQDIANKVLLALFTCEMLVKMYSLGLQAYFVSLFNRFDCFVVCGGITETILVELELMSPLGVSVFRCVRLLRIFKVTRHWTSLSNLVASLLNSMKSIASLLLLLFLFIIIFSLLGMQLFGGKFNFDETQTKRSTFDNFPQALLTVFQILTGEDWNAVMYDGIMAYGGPSSSGMIVCIYFIILFICGNYILLNVFLAIAVDNLADAESLNTAQKEEAEEKERKKIARKESLENKKNNKPEVNQIANSDNKVTIDDYQEDAEDKDPYPPCDVPVGEEEEEEEEDEPEVPAGPRPRRISELNMKEKIAPIPEGSAFFILSKTNPIRVGCHKLINHHIFTNLILVFIMLSSAALAAEDPIRSHSFRNTILGYFDYAFTAIFTVEILLKMTTFGAFLHKGAFCRNYFNLLDMLVVGVSLVSFGIQSSAISVVKILRVLRVLRPLRAINRAKGLKHVVQCVFVAIRTIGNIMIVTTLLQFMFACIGVQLFKGKFYRCTDEAKSNPEECRGLFILYKDGDVDSPVVRERIWQNSDFNFDNVLSAMMALFTVSTFEGWPALLYKAIDSNGENVGPVYNYRVEISIFFIIYIIIVAFFMMNIFVGFVIVTFQEQGEKEYKNCELDKNQRQCVEYALKARPLRRYIPKNPYQYKFWYVVNSSPFEYMMFVLIMLNTLCLAMQHYEQSKMFNDAMDILNMVFTGVFTVEMVLKVIAFKPKGYFSDAWNTFDSLIVIGSIIDVALSEADPSESETIPLPTATPGNSEESNRISITFFRLFRVMRLVKLLSRGEGIRTLLWTFIKSFQALPYVALLIAMLFFIYAVIGMQMFGKVAMRDNNQINRNNNFQTFPQAVLLLFRCATGEAWQEIMLACLPGKLCDPDSDYNPGEEYTCGSNFAIVYFISFYMLCAFLIINLFVAVIMDNFDYLTRDWSILGPHHLDEFKRIWSEYDPEAKGRIKHLDVVTLLRRIQPPLGFGKLCPHRVACKRLVAMNMPLNSDGTVMFNATLFALVRTALKIKTEGNLEQANEELRAVIKKIWKKTSMKLLDQVVPPAGDDEVTVGKFYATFLIQDYFRKFKKRKEQGLVGKYPAKNTTIALQAGLRTLHDIGPEIRRAISCDLQDDEPEDSKPEEEDVFKRNGALLGNHVNHVNSDRRDSLQQTNTTHRPLHVQRPSMPPASDTEKPLFPPAGNSGCHNHHNHNSIGKQAPTSTNANLNNANMSKAAHGKPPSIGNLEHVSENGHYSCKHDRELQRRSSIKRTRYYETYIRSESGDEQFPTICREDPEIHGYFRDPRCLGEQEYFSSEECCEDDSSPTWSRQNYNYYNRYPGSSMDFERPRGYHHPQGFLEDDDSPTGYDSRRSPRRRLLPPTPPSHRRSSFNFECLRRQSSQDDVLPSPALPHRAALPLHLMQQQIMAVAGLDSSKAQKYSPSHSTRSWATPPATPPYRDWSPCYTPLIQVDRSESMDQVNGSLPSLHRSSWYTDEPDISYRTFTPASLTVPSSFRNKNSDKQRSADSLVEAVLISEGLGRYARDPKFVSATKHEIADACDLTIDEMESAASTLLNGSVCPRANGDMGPISHRQDYELQDFGPGYSDEEPDPGREEEDLADEMICITTL.

3 disordered regions span residues 1–21, 30–49, and 64–100; these read MMMM…EDHA, TRLP…SKQT, and KAAQ…SSNS. Residues 1 to 126 lie on the Cytoplasmic side of the membrane; the sequence is MMMMMMMKKM…RACISIVEWK (126 aa). Positions 38-49 are enriched in polar residues; the sequence is GPTSQPNSSKQT. A compositionally biased stretch (basic residues) spans 82-93; the sequence is QRKRQQYAKSKK. One copy of the I repeat lies at 113–409; it reads NPIRRACISI…LVLGVLSGEF (297 aa). Residues 127-145 traverse the membrane as a helical segment; the sequence is PFDIFILLAIFANCVALAI. At 146 to 163 the chain is on the extracellular side; the sequence is YIPFPEDDSNSTNHNLEK. Residues 164–183 traverse the membrane as a helical segment; that stretch reads VEYAFLIIFTVETFLKIIAY. Topologically, residues 184-195 are cytoplasmic; it reads GLLLHPNAYVRN. A helical membrane pass occupies residues 196-214; it reads GWNLLDFVIVIVGLFSVIL. At 215–235 the chain is on the extracellular side; that stretch reads EQLTKETEGGNHSSGKSGGFD. Residues 236 to 254 traverse the membrane as a helical segment; that stretch reads VKALRAFRVLRPLRLVSGV. The Cytoplasmic portion of the chain corresponds to 255–273; that stretch reads PSLQVVLNSIIKAMVPLLH. Residues 274–293 form a helical membrane-spanning segment; sequence IALLVLFVIIIYAIIGLELF. Topologically, residues 294–381 are extracellular; that stretch reads IGKMHKTCFF…WVNDAIGWEW (88 aa). Position 364 (glutamate 364) interacts with Ca(2+). The chain crosses the membrane as a helical span at residues 382–406; that stretch reads PWVYFVSLIILGSFFVLNLVLGVLS. The Cytoplasmic portion of the chain corresponds to 407–543; it reads GEFSKEREKA…RRCRAAVKSV (137 aa). Positions 429 to 446 are binding to the beta subunit; it reads QQLEEDLKGYLDWITQAE. The tract at residues 449-480 is disordered; that stretch reads DPENEEEGGEEGKRNTSMPTSETESVNTENVS. The segment covering 463–479 has biased composition (polar residues); it reads NTSMPTSETESVNTENV. Residues 529-775 form an II repeat; the sequence is NRFNRRRCRA…VFLAIAVDNL (247 aa). Residues 544 to 563 traverse the membrane as a helical segment; that stretch reads TFYWLVIVLVFLNTLTISSE. Over 564-578 the chain is Extracellular; that stretch reads HYNQPDWLTQIQDIA. A helical transmembrane segment spans residues 579–597; the sequence is NKVLLALFTCEMLVKMYSL. The Cytoplasmic portion of the chain corresponds to 598–605; the sequence is GLQAYFVS. The chain crosses the membrane as a helical span at residues 606 to 624; it reads LFNRFDCFVVCGGITETIL. Residues 625 to 634 are Extracellular-facing; the sequence is VELELMSPLG. The chain crosses the membrane as a helical span at residues 635-653; it reads VSVFRCVRLLRIFKVTRHW. Residues 654 to 672 lie on the Cytoplasmic side of the membrane; that stretch reads TSLSNLVASLLNSMKSIAS. A helical transmembrane segment spans residues 673–693; sequence LLLLLFLFIIIFSLLGMQLFG. Over 694–747 the chain is Extracellular; the sequence is GKFNFDETQTKRSTFDNFPQALLTVFQILTGEDWNAVMYDGIMAYGGPSSSGMI. Glutamate 725 is a binding site for Ca(2+). A helical transmembrane segment spans residues 748–772; that stretch reads VCIYFIILFICGNYILLNVFLAIAV. Positions 771-810 form a coiled coil; it reads AVDNLADAESLNTAQKEEAEEKERKKIARKESLENKKNNK. At 773–906 the chain is on the cytoplasmic side; it reads DNLADAESLN…VGCHKLINHH (134 aa). Residues 786–810 are compositionally biased toward basic and acidic residues; that stretch reads KEEAEEKERKKIARKESLENKKNNK. Positions 786-870 are disordered; sequence KEEAEEKERK…AGPRPRRISE (85 aa). A compositionally biased stretch (polar residues) spans 811–822; the sequence is PEVNQIANSDNK. The segment covering 845–858 has biased composition (acidic residues); the sequence is VGEEEEEEEEDEPE. The III repeat unit spans residues 893–1175; the sequence is NPIRVGCHKL…IFVGFVIVTF (283 aa). Residues 907–925 form a helical membrane-spanning segment; that stretch reads IFTNLILVFIMLSSAALAA. The Extracellular segment spans residues 926-941; that stretch reads EDPIRSHSFRNTILGY. Residues 942–961 traverse the membrane as a helical segment; it reads FDYAFTAIFTVEILLKMTTF. Topologically, residues 962–973 are cytoplasmic; that stretch reads GAFLHKGAFCRN. Residues 974 to 992 form a helical membrane-spanning segment; it reads YFNLLDMLVVGVSLVSFGI. Over 993–998 the chain is Extracellular; that stretch reads QSSAIS. Residues 999–1018 traverse the membrane as a helical segment; sequence VVKILRVLRVLRPLRAINRA. At 1019-1037 the chain is on the cytoplasmic side; the sequence is KGLKHVVQCVFVAIRTIGN. Residues 1038-1057 traverse the membrane as a helical segment; it reads IMIVTTLLQFMFACIGVQLF. The Extracellular segment spans residues 1058 to 1147; sequence KGKFYRCTDE…VGPVYNYRVE (90 aa). The dihydropyridine binding stretch occupies residues 1095 to 1185; sequence RIWQNSDFNF…QEQGEKEYKN (91 aa). Residue glutamate 1121 participates in Ca(2+) binding. Residues 1148–1168 traverse the membrane as a helical segment; it reads ISIFFIIYIIIVAFFMMNIFV. Residues 1169 to 1225 are Cytoplasmic-facing; that stretch reads GFVIVTFQEQGEKEYKNCELDKNQRQCVEYALKARPLRRYIPKNPYQYKFWYVVNSS. The stretch at 1212-1487 is one IV repeat; the sequence is NPYQYKFWYV…LFVAVIMDNF (276 aa). A helical membrane pass occupies residues 1226–1244; the sequence is PFEYMMFVLIMLNTLCLAM. Residues 1245 to 1259 are Extracellular-facing; it reads QHYEQSKMFNDAMDI. Residues 1260-1279 form a helical membrane-spanning segment; it reads LNMVFTGVFTVEMVLKVIAF. At 1280-1286 the chain is on the cytoplasmic side; it reads KPKGYFS. A helical membrane pass occupies residues 1287-1308; it reads DAWNTFDSLIVIGSIIDVALSE. The Extracellular portion of the chain corresponds to 1309–1333; it reads ADPSESETIPLPTATPGNSEESNRI. A helical membrane pass occupies residues 1334–1353; the sequence is SITFFRLFRVMRLVKLLSRG. At 1354–1372 the chain is on the cytoplasmic side; the sequence is EGIRTLLWTFIKSFQALPY. Residues 1373–1392 traverse the membrane as a helical segment; sequence VALLIAMLFFIYAVIGMQMF. The Extracellular portion of the chain corresponds to 1393-1459; that stretch reads GKVAMRDNNQ…GEEYTCGSNF (67 aa). Residues 1440 to 1506 form a dihydropyridine binding region; sequence LCDPDSDYNP…LGPHHLDEFK (67 aa). The segment at 1452–1495 is phenylalkylamine binding; the sequence is EYTCGSNFAIVYFISFYMLCAFLIINLFVAVIMDNFDYLTRDWS. A helical transmembrane segment spans residues 1460–1484; sequence AIVYFISFYMLCAFLIINLFVAVIM. Over 1485 to 2179 the chain is Cytoplasmic; it reads DNFDYLTRDW…ADEMICITTL (695 aa). Disordered regions lie at residues 1704 to 1789, 1896 to 1941, and 2135 to 2171; these read LLGN…AHGK, FERP…RSSF, and GDMG…DLAD. Over residues 1764 to 1782 the composition is skewed to polar residues; that stretch reads SIGKQAPTSTNANLNNANM. A compositionally biased stretch (acidic residues) spans 2156 to 2171; it reads SDEEPDPGREEEDLAD.

The protein belongs to the calcium channel alpha-1 subunit (TC 1.A.1.11) family. CACNA1D subfamily. In terms of assembly, voltage-dependent calcium channels are multisubunit complexes, consisting of alpha-1, alpha-2, beta and delta subunits in a 1:1:1:1 ratio. The channel activity is directed by the pore-forming and voltage-sensitive alpha-1 subunit. In many cases, this subunit is sufficient to generate voltage-sensitive calcium channel activity. The auxiliary subunits beta and alpha-2/delta linked by a disulfide bridge regulate the channel activity. Interacts (via IQ domain) with CABP1 and CABP4 in a calcium independent manner. Interacts with RIMBP2. In terms of tissue distribution, expressed in the inner hair cells (IHC) of the cochlea.

It localises to the membrane. It carries out the reaction Ca(2+)(in) = Ca(2+)(out). Voltage-sensitive calcium channels (VSCC) mediate the entry of calcium ions into excitable cells and are also involved in a variety of calcium-dependent processes, including muscle contraction, hormone or neurotransmitter release, gene expression, cell motility, cell division and cell death. The isoform alpha-1D gives rise to L-type calcium currents. Long-lasting (L-type) calcium channels belong to the 'high-voltage activated' (HVA) group. They are blocked by dihydropyridines (DHP), phenylalkylamines, and by benzothiazepines. The chain is Voltage-dependent L-type calcium channel subunit alpha-1D (Cacna1d) from Mus musculus (Mouse).